The chain runs to 475 residues: Gamma-aminobutyric acid receptor subunit gamma-2 (475 aa).

Positions 1 to 39 (MSSPNIWSTGSSVYSTPVFSQKMTVWILLLLSLYPGFTS) are cleaved as a signal peptide. Over 40 to 275 (QKSDDDYEDY…FDLSRRMGYF (236 aa)) the chain is Extracellular. Residues Asn52 and Asn129 are each glycosylated (N-linked (GlcNAc...) asparagine). Cys190 and Cys204 form a disulfide bridge. Residue Asn247 is glycosylated (N-linked (GlcNAc...) asparagine). Residues 276–296 (TIQTYIPCTLIVVLSWVSFWI) form a helical membrane-spanning segment. The Cytoplasmic segment spans residues 297–302 (NKDAVP). The chain crosses the membrane as a helical span at residues 303–322 (ARTSLGITTVLTMTTLSTIA). Topologically, residues 323-334 (RKSLPKVSYVTA) are extracellular. A helical transmembrane segment spans residues 335-359 (MDLFVSVCFIFVFSALVEYGTLHYF). Topologically, residues 360–451 (VSNRKPSKDK…IHIRIAKMDS (92 aa)) are cytoplasmic. An interaction with GABARAP region spans residues 433–450 (RTGAWRHGRIHIRIAKMD). Residues 452–472 (YARIFFPTAFCLFNLVYWVSY) form a helical membrane-spanning segment. Residues 473–475 (LYL) lie on the Extracellular side of the membrane.

This sequence belongs to the ligand-gated ion channel (TC 1.A.9) family. Gamma-aminobutyric acid receptor (TC 1.A.9.5) subfamily. GABRG2 sub-subfamily. In terms of assembly, heteropentamer, formed by a combination of alpha (GABRA1-6), beta (GABRB1-3), gamma (GABRG1-3), delta (GABRD), epsilon (GABRE), rho (GABRR1-3), pi (GABRP) and theta (GABRQ) chains, each subunit exhibiting distinct physiological and pharmacological properties. Interacts with GABARAP. Interacts with KIF21B. Identified in a complex of 720 kDa composed of LHFPL4, NLGN2, GABRA1, GABRB2, GABRG2 and GABRB3. Interacts with LHFPL4. Interacts with SHISA7; interaction leads to the regulation of GABA(A) receptor trafficking, channel deactivation kinetics and pharmacology. Post-translationally, palmitoylated by ZDHHC3/GODZ; required for the accumulation of GABA(A) receptors at the postsynaptic membrane of inhibitory GABAergic synapses.

It is found in the postsynaptic cell membrane. It localises to the cell membrane. The protein localises to the cell projection. The protein resides in the dendrite. Its subcellular location is the cytoplasmic vesicle membrane. It catalyses the reaction chloride(in) = chloride(out). Allosterically activated by benzodiazepines. Activated by pentobarbital. Potentiated by etomidate, propofol, pregnanolone. Inhibited by the antagonist bicuculline. Inhibited by zinc ions. Potentiated by histamine. Functionally, gamma subunit of the heteropentameric ligand-gated chloride channel gated by gamma-aminobutyric acid (GABA), a major inhibitory neurotransmitter in the brain. GABA-gated chloride channels, also named GABA(A) receptors (GABAAR), consist of five subunits arranged around a central pore and contain GABA active binding site(s) located at the alpha and beta subunit interface(s). When activated by GABA, GABAARs selectively allow the flow of chloride anions across the cell membrane down their electrochemical gradient. Gamma-2/GABRG2-containing GABAARs are found at both synaptic and extrasynaptic sites. Chloride influx into the postsynaptic neuron following GABAAR opening decreases the neuron ability to generate a new action potential, thereby reducing nerve transmission. GABAARs containing alpha-1 and beta-2 or -3 subunits exhibit synaptogenic activity; the gamma-2 subunit being necessary but not sufficient to induce rapid synaptic contacts formation. Extrasynaptic gamma-2-containing receptors contribute to the tonic GABAergic inhibition. GABAARs function also as histamine receptor where histamine binds at the interface of two neighboring beta subunits and potentiates GABA response in a gamma-2 subunit-controlled manner. In Homo sapiens (Human), this protein is Gamma-aminobutyric acid receptor subunit gamma-2.